The sequence spans 219 residues: UPF0502 protein Gura_3445 (219 aa).

The tract at residues 162-181 (AGEPDLPDDTPAPPPEPARQ) is disordered.

Belongs to the UPF0502 family.

This Geotalea uraniireducens (strain Rf4) (Geobacter uraniireducens) protein is UPF0502 protein Gura_3445.